Here is a 292-residue protein sequence, read N- to C-terminus: tRNA dimethylallyltransferase (292 aa).

5–12 (APTGAGKT) provides a ligand contact to ATP. 7 to 12 (TGAGKT) is a substrate binding site. The segment at 29–32 (DSRQ) is interaction with substrate tRNA.

This sequence belongs to the IPP transferase family. Monomer. It depends on Mg(2+) as a cofactor.

The catalysed reaction is adenosine(37) in tRNA + dimethylallyl diphosphate = N(6)-dimethylallyladenosine(37) in tRNA + diphosphate. Catalyzes the transfer of a dimethylallyl group onto the adenine at position 37 in tRNAs that read codons beginning with uridine, leading to the formation of N6-(dimethylallyl)adenosine (i(6)A). This is tRNA dimethylallyltransferase from Leptospira borgpetersenii serovar Hardjo-bovis (strain JB197).